The following is a 463-amino-acid chain: Cysteine--tRNA ligase (463 aa).

Cysteine 29 provides a ligand contact to Zn(2+). A 'HIGH' region motif is present at residues 31-41 (MTIYDLCHIGH). Residues cysteine 218, histidine 243, and glutamate 247 each coordinate Zn(2+). Positions 275–279 (KMSKS) match the 'KMSKS' region motif. Lysine 278 is a binding site for ATP.

It belongs to the class-I aminoacyl-tRNA synthetase family. In terms of assembly, monomer. The cofactor is Zn(2+).

Its subcellular location is the cytoplasm. The catalysed reaction is tRNA(Cys) + L-cysteine + ATP = L-cysteinyl-tRNA(Cys) + AMP + diphosphate. The protein is Cysteine--tRNA ligase of Polaromonas naphthalenivorans (strain CJ2).